We begin with the raw amino-acid sequence, 396 residues long: MAEKEHYERTKPHVNIGTIGHVDHGKTTLTAAITTVLAEDGLAQAEDYSQIDAAPEEKERGITINTAHVEYETKNRHYAHMDAPGHADYIKNMITGAAQMDGAILVVAATDGPMPQTREHILLARQVGVKYIVVFLNKVDLVDDPELIDLVEMEVRDLLTEYDYPGDDVPVIRGSALKALQGDPEQQDVIRKLMETVDEYIPTPERDTDKPFLMPVEDVFTITGRGTVASGRIDRGTVKVGDEVEIVGLTDKVEKSTVTGLEMFHKTLDLGEAGDNVGVLLRGIDRDQVERGQVLAAPGSIQTHKKFKGQVYILNKDEGGRHTPFFSDYRPQFYFHTTDVTGKIELPEGTEMVMPGDNVEFTVELIKPVAIEKGTKFTIREGGKTVGAGQVTEILD.

The tr-type G domain occupies 11 to 205 (KPHVNIGTIG…TVDEYIPTPE (195 aa)). Positions 20-27 (GHVDHGKT) are G1. 20–27 (GHVDHGKT) serves as a coordination point for GTP. A Mg(2+)-binding site is contributed by threonine 27. Residues 61-65 (GITIN) form a G2 region. Positions 82–85 (DAPG) are G3. Residues 82 to 86 (DAPGH) and 137 to 140 (NKVD) each bind GTP. Residues 137-140 (NKVD) are G4. Residues 175-177 (SAL) are G5.

The protein belongs to the TRAFAC class translation factor GTPase superfamily. Classic translation factor GTPase family. EF-Tu/EF-1A subfamily. Monomer.

It localises to the cytoplasm. It catalyses the reaction GTP + H2O = GDP + phosphate + H(+). In terms of biological role, GTP hydrolase that promotes the GTP-dependent binding of aminoacyl-tRNA to the A-site of ribosomes during protein biosynthesis. This chain is Elongation factor Tu, found in Lactobacillus gasseri (strain ATCC 33323 / DSM 20243 / BCRC 14619 / CIP 102991 / JCM 1131 / KCTC 3163 / NCIMB 11718 / NCTC 13722 / AM63).